The sequence spans 185 residues: Large ribosomal subunit protein uL22 (185 aa).

This sequence belongs to the universal ribosomal protein uL22 family. Part of the 50S ribosomal subunit.

Functionally, this protein binds specifically to 23S rRNA. It makes multiple contacts with different domains of the 23S rRNA in the assembled 50S subunit and ribosome. In terms of biological role, the globular domain of the protein is located near the polypeptide exit tunnel on the outside of the subunit, while an extended beta-hairpin is found that lines the wall of the exit tunnel in the center of the 70S ribosome. The sequence is that of Large ribosomal subunit protein uL22 from Pyrobaculum neutrophilum (strain DSM 2338 / JCM 9278 / NBRC 100436 / V24Sta) (Thermoproteus neutrophilus).